We begin with the raw amino-acid sequence, 473 residues long: ATP synthase subunit beta (473 aa).

158 to 165 contacts ATP; sequence GGAGVGKT.

This sequence belongs to the ATPase alpha/beta chains family. In terms of assembly, F-type ATPases have 2 components, CF(1) - the catalytic core - and CF(0) - the membrane proton channel. CF(1) has five subunits: alpha(3), beta(3), gamma(1), delta(1), epsilon(1). CF(0) has three main subunits: a(1), b(2) and c(9-12). The alpha and beta chains form an alternating ring which encloses part of the gamma chain. CF(1) is attached to CF(0) by a central stalk formed by the gamma and epsilon chains, while a peripheral stalk is formed by the delta and b chains.

The protein resides in the cell membrane. It catalyses the reaction ATP + H2O + 4 H(+)(in) = ADP + phosphate + 5 H(+)(out). Functionally, produces ATP from ADP in the presence of a proton gradient across the membrane. The catalytic sites are hosted primarily by the beta subunits. The protein is ATP synthase subunit beta of Anoxybacillus flavithermus (strain DSM 21510 / WK1).